Reading from the N-terminus, the 105-residue chain is Large ribosomal subunit protein uL18c (105 aa).

Belongs to the universal ribosomal protein uL18 family. In terms of assembly, part of the 50S ribosomal subunit; contacts the 5S rRNA.

It localises to the plastid. It is found in the chloroplast. Binds 5S rRNA, forms part of the central protuberance of the 50S subunit. This Gracilaria tenuistipitata var. liui (Red alga) protein is Large ribosomal subunit protein uL18c (rpl18).